The following is a 348-amino-acid chain: Dihydroorotase (348 aa).

Positions 17 and 19 each coordinate Zn(2+). Substrate is bound by residues 19-21 (HLR) and Asn45. Positions 103, 140, and 178 each coordinate Zn(2+). Position 103 is an N6-carboxylysine (Lys103). His140 is a binding site for substrate. Residue Leu223 participates in substrate binding. Zn(2+) is bound at residue Asp251. Asp251 is a catalytic residue. Substrate contacts are provided by His255 and Ala267.

This sequence belongs to the metallo-dependent hydrolases superfamily. DHOase family. Class II DHOase subfamily. As to quaternary structure, homodimer. It depends on Zn(2+) as a cofactor.

The catalysed reaction is (S)-dihydroorotate + H2O = N-carbamoyl-L-aspartate + H(+). It participates in pyrimidine metabolism; UMP biosynthesis via de novo pathway; (S)-dihydroorotate from bicarbonate: step 3/3. Its function is as follows. Catalyzes the reversible cyclization of carbamoyl aspartate to dihydroorotate. In Serratia proteamaculans (strain 568), this protein is Dihydroorotase.